The chain runs to 441 residues: Ribulose bisphosphate carboxylase large chain (441 aa).

Residues asparagine 89 and threonine 139 each coordinate substrate. Lysine 141 serves as the catalytic Proton acceptor. Lysine 143 is a substrate binding site. Mg(2+)-binding residues include lysine 167, aspartate 169, and glutamate 170. Residue lysine 167 is modified to N6-carboxylysine. Histidine 260 acts as the Proton acceptor in catalysis. Residues residue 261 and serine 345 each contribute to the substrate site.

This sequence belongs to the RuBisCO large chain family. Type I subfamily. In terms of assembly, heterohexadecamer of 8 large chains and 8 small chains; disulfide-linked. The disulfide link is formed within the large subunit homodimers. Requires Mg(2+) as cofactor. The disulfide bond which can form in the large chain dimeric partners within the hexadecamer appears to be associated with oxidative stress and protein turnover.

It localises to the plastid. The protein localises to the chloroplast. It catalyses the reaction 2 (2R)-3-phosphoglycerate + 2 H(+) = D-ribulose 1,5-bisphosphate + CO2 + H2O. It carries out the reaction D-ribulose 1,5-bisphosphate + O2 = 2-phosphoglycolate + (2R)-3-phosphoglycerate + 2 H(+). RuBisCO catalyzes two reactions: the carboxylation of D-ribulose 1,5-bisphosphate, the primary event in carbon dioxide fixation, as well as the oxidative fragmentation of the pentose substrate in the photorespiration process. Both reactions occur simultaneously and in competition at the same active site. In Asclepias exaltata (Poke milkweed), this protein is Ribulose bisphosphate carboxylase large chain.